The sequence spans 865 residues: Alanine--tRNA ligase (865 aa).

Residues histidine 554, histidine 558, cysteine 656, and histidine 660 each contribute to the Zn(2+) site.

This sequence belongs to the class-II aminoacyl-tRNA synthetase family. The cofactor is Zn(2+).

Its subcellular location is the cytoplasm. It carries out the reaction tRNA(Ala) + L-alanine + ATP = L-alanyl-tRNA(Ala) + AMP + diphosphate. Its function is as follows. Catalyzes the attachment of alanine to tRNA(Ala) in a two-step reaction: alanine is first activated by ATP to form Ala-AMP and then transferred to the acceptor end of tRNA(Ala). Also edits incorrectly charged Ser-tRNA(Ala) and Gly-tRNA(Ala) via its editing domain. The polypeptide is Alanine--tRNA ligase (Francisella tularensis subsp. tularensis (strain FSC 198)).